The primary structure comprises 366 residues: Chorismate synthase (366 aa).

Arg-48 contacts NADP(+). FMN-binding positions include Arg-125–Ser-127, Asn-241–Ala-242, Gly-285, Lys-300–Ser-304, and Arg-326.

It belongs to the chorismate synthase family. Homotetramer. FMNH2 serves as cofactor.

It carries out the reaction 5-O-(1-carboxyvinyl)-3-phosphoshikimate = chorismate + phosphate. Its pathway is metabolic intermediate biosynthesis; chorismate biosynthesis; chorismate from D-erythrose 4-phosphate and phosphoenolpyruvate: step 7/7. Functionally, catalyzes the anti-1,4-elimination of the C-3 phosphate and the C-6 proR hydrogen from 5-enolpyruvylshikimate-3-phosphate (EPSP) to yield chorismate, which is the branch point compound that serves as the starting substrate for the three terminal pathways of aromatic amino acid biosynthesis. This reaction introduces a second double bond into the aromatic ring system. This chain is Chorismate synthase, found in Ruegeria pomeroyi (strain ATCC 700808 / DSM 15171 / DSS-3) (Silicibacter pomeroyi).